Reading from the N-terminus, the 568-residue chain is Small ribosomal subunit protein bS1 (568 aa).

6 S1 motif domains span residues 27-93 (GYVA…LSRE), 111-177 (GERV…VSRR), 198-266 (GQVV…LGMK), 283-353 (GKKI…LGLK), 370-440 (GTEV…LGIK), and 459-530 (NAVV…LSIK).

Belongs to the bacterial ribosomal protein bS1 family.

Its function is as follows. Binds mRNA; thus facilitating recognition of the initiation point. It is needed to translate mRNA with a short Shine-Dalgarno (SD) purine-rich sequence. This Rhizobium meliloti (strain 1021) (Ensifer meliloti) protein is Small ribosomal subunit protein bS1 (rpsA).